Reading from the N-terminus, the 88-residue chain is Protein transport protein Sec61 subunit beta (88 aa).

The interval 1–41 (MDSSVPGGQRTLQKRRNAQLQKEKKANQTPASPRQAGFGGS) is disordered. The Cytoplasmic segment spans residues 1-60 (MDSSVPGGQRTLQKRRNAQLQKEKKANQTPASPRQAGFGGSSSSILKLYTDEANGLRVDP). Residues 61-81 (LVVLFLAVAFVFSVVALHVVA) traverse the membrane as a helical segment.

The protein belongs to the SEC61-beta family. Heterotrimeric complex composed of SEC61, SEB1 and SSS1.

The protein localises to the endoplasmic reticulum membrane. In terms of biological role, necessary for protein translocation in the endoplasmic reticulum. The chain is Protein transport protein Sec61 subunit beta (SBH1) from Kluyveromyces lactis (strain ATCC 8585 / CBS 2359 / DSM 70799 / NBRC 1267 / NRRL Y-1140 / WM37) (Yeast).